The following is a 747-amino-acid chain: Oxysterol-binding protein-related protein 11 (747 aa).

An N-acetylmethionine modification is found at Met1. Residues 1–50 (MQGGEPVSTMKVSESEGKLEGQATAVTPNKNSSCGGGISSSSSSRGGSAK) are disordered. Ser15 is subject to Phosphoserine. Thr27 bears the Phosphothreonine mark. A PH domain is found at 58-155 (MENVYGYLMK…WVSRLQICTQ (98 aa)). At Tyr62 the chain carries Phosphotyrosine. The segment at 158–188 (TEAIGKNNPPLKSRSFSLASSSNSPISQRRP) is disordered. The span at 170–184 (SRSFSLASSSNSPIS) shows a compositional bias: low complexity. Residues Ser172, Ser174, Ser177, Ser181, Ser184, and Ser189 each carry the phosphoserine modification. The span at 689–713 (EIDKATEHKHTLEERQRTEERHRTE) shows a compositional bias: basic and acidic residues. The tract at residues 689 to 714 (EIDKATEHKHTLEERQRTEERHRTET) is disordered.

It belongs to the OSBP family. Heterodimer with OSBPL9. As to expression, present at highest levels in ovary, testis, kidney, liver, stomach, brain, and adipose tissue. Strong expression (at protein level) in epithelial cells of kidney tubules, testicular tubules, caecum, and skin. Present at low levels in subcutaneous and visceral adipose tissue (at protein level).

It is found in the late endosome membrane. The protein resides in the golgi apparatus. The protein localises to the trans-Golgi network membrane. The catalysed reaction is a 1,2-diacyl-sn-glycero-3-phospho-(1D-myo-inositol 4-phosphate)(out) + a 1,2-diacyl-sn-glycero-3-phospho-L-serine(in) = a 1,2-diacyl-sn-glycero-3-phospho-(1D-myo-inositol 4-phosphate)(in) + a 1,2-diacyl-sn-glycero-3-phospho-L-serine(out). Plays a role in regulating ADIPOQ and FABP4 levels in differentiating adipocytes and is also involved in regulation of adipocyte triglyceride storage. Weakly binds 25-hydroxycholesterol. Interacts with OSBPL9 to function as lipid transfer proteins. Together they form a heterodimer that localizes at the ER-trans-Golgi membrane contact sites, and exchanges phosphatidylserine (1,2-diacyl-sn-glycero-3-phospho-L-serine, PS) for phosphatidylinositol-4-phosphate (1,2-diacyl-sn-glycero-3-phospho-(1D-myo-inositol 4-phosphate), PI(4)P) between the two organelles, a step that is critical for sphingomyelin synthesis in the Golgi complex. In Homo sapiens (Human), this protein is Oxysterol-binding protein-related protein 11 (OSBPL11).